A 471-amino-acid polypeptide reads, in one-letter code: MAQAEAVQGKIVQCIGAVVDVEFPRDKMPKIYDALKFEGSALTLEVQQQLGDGVVRTIALGSSDGLRRGLIVTNTQAPITVPVGKATLGRIMDVLGAPIDERGPVDQTLTASIHRKAPAYDELSPSQDLLETGIKVIDLVCPFAKGGKVGLFGGAGVGKTVNMMELINNIAKAHSGLSVFAGVGERTREGNDFYHEMADSGVVNLEKLENSKVAMVYGQMNEPPGNRLRVALTGLTIAESFRDEGRDVLFFVDNIYRYTLAGTEVSALLGRMPSAVGYQPTLAEEMGRLQERITSTKVGSITSIQAVYVPADDLTDPSPATTFAHLDSTVVLSRDIASLGIYPAVDPLDSTSRQLDPNVVGQEHYNVARAVQGTLQRYKELRDIIAILGMDELAPEDKLAVARARKIQRFLSQPFHVAEVFTGSPGKYVPLSETIRGFKMIVNGEADHLPEQAFYMVGTIDEAFEKAKKVA.

Residue 153–160 (GGAGVGKT) coordinates ATP.

Belongs to the ATPase alpha/beta chains family. In terms of assembly, F-type ATPases have 2 components, CF(1) - the catalytic core - and CF(0) - the membrane proton channel. CF(1) has five subunits: alpha(3), beta(3), gamma(1), delta(1), epsilon(1). CF(0) has three main subunits: a(1), b(2) and c(9-12). The alpha and beta chains form an alternating ring which encloses part of the gamma chain. CF(1) is attached to CF(0) by a central stalk formed by the gamma and epsilon chains, while a peripheral stalk is formed by the delta and b chains.

Its subcellular location is the cell inner membrane. It carries out the reaction ATP + H2O + 4 H(+)(in) = ADP + phosphate + 5 H(+)(out). In terms of biological role, produces ATP from ADP in the presence of a proton gradient across the membrane. The catalytic sites are hosted primarily by the beta subunits. This chain is ATP synthase subunit beta, found in Verminephrobacter eiseniae (strain EF01-2).